The primary structure comprises 203 residues: Dephospho-CoA kinase (203 aa).

Positions 4-201 constitute a DPCK domain; that stretch reads IIGLTGGIGS…RKYLMLARKH (198 aa). An ATP-binding site is contributed by 12–17; the sequence is GSGKTR.

This sequence belongs to the CoaE family.

It localises to the cytoplasm. It catalyses the reaction 3'-dephospho-CoA + ATP = ADP + CoA + H(+). Its pathway is cofactor biosynthesis; coenzyme A biosynthesis; CoA from (R)-pantothenate: step 5/5. In terms of biological role, catalyzes the phosphorylation of the 3'-hydroxyl group of dephosphocoenzyme A to form coenzyme A. This chain is Dephospho-CoA kinase, found in Nitrosomonas europaea (strain ATCC 19718 / CIP 103999 / KCTC 2705 / NBRC 14298).